Here is a 395-residue protein sequence, read N- to C-terminus: Small ribosomal subunit protein mS31 (395 aa).

A mitochondrion-targeting transit peptide spans 1 to 65 (MFPRVSTFLP…IQRYFGTNSV (65 aa)). Disordered regions lie at residues 70–97 (KDKQ…NTKK) and 175–196 (SELL…DAKR). Residues 183 to 196 (QHEEESRAQRDAKR) show a composition bias toward basic and acidic residues.

It belongs to the mitochondrion-specific ribosomal protein mS31 family. As to quaternary structure, component of the mitochondrial small ribosomal subunit (mt-SSU). Mature mammalian 55S mitochondrial ribosomes consist of a small (28S) and a large (39S) subunit. The 28S small subunit contains a 12S ribosomal RNA (12S mt-rRNA) and 30 different proteins. The 39S large subunit contains a 16S rRNA (16S mt-rRNA), a copy of mitochondrial valine transfer RNA (mt-tRNA(Val)), which plays an integral structural role, and 52 different proteins.

Its subcellular location is the mitochondrion. This chain is Small ribosomal subunit protein mS31 (MRPS31), found in Homo sapiens (Human).